A 922-amino-acid chain; its full sequence is Ubiquitin carboxyl-terminal hydrolase 29 (922 aa).

Residues 160–196 (GILENQGGKGQNTLSSDVQTNEDILKEDNPVPNKKYK) are disordered. The segment covering 170 to 181 (QNTLSSDVQTNE) has biased composition (polar residues). Residues 285–885 (QGFPNLGNTC…SGYIFFYMHN (601 aa)) enclose the USP domain. The active-site Nucleophile is the Cys294. The Proton acceptor role is filled by His840.

It belongs to the peptidase C19 family.

The protein resides in the cytoplasm. Its subcellular location is the perinuclear region. The catalysed reaction is Thiol-dependent hydrolysis of ester, thioester, amide, peptide and isopeptide bonds formed by the C-terminal Gly of ubiquitin (a 76-residue protein attached to proteins as an intracellular targeting signal).. Functionally, deubiquitinase involved in innate antiviral immunity by mediating 'Lys-48'-linked deubiquitination of CGAS, thereby promoting its stabilization. The polypeptide is Ubiquitin carboxyl-terminal hydrolase 29 (Homo sapiens (Human)).